Here is a 278-residue protein sequence, read N- to C-terminus: Large ribosomal subunit protein uL2 (278 aa).

2 disordered regions span residues Arg26–Gly57 and Val225–Arg278. The segment covering Arg258 to Arg278 has biased composition (basic residues).

It belongs to the universal ribosomal protein uL2 family. In terms of assembly, part of the 50S ribosomal subunit. Forms a bridge to the 30S subunit in the 70S ribosome.

In terms of biological role, one of the primary rRNA binding proteins. Required for association of the 30S and 50S subunits to form the 70S ribosome, for tRNA binding and peptide bond formation. It has been suggested to have peptidyltransferase activity; this is somewhat controversial. Makes several contacts with the 16S rRNA in the 70S ribosome. This chain is Large ribosomal subunit protein uL2, found in Streptomyces coelicolor (strain ATCC BAA-471 / A3(2) / M145).